Here is a 228-residue protein sequence, read N- to C-terminus: Octanoyltransferase (228 aa).

The region spanning 30-214 (KKIGDTLLLL…YFGKVFGKSL (185 aa)) is the BPL/LPL catalytic domain. Substrate is bound by residues 75–82 (RGGDVTYH), 144–146 (AIG), and 157–159 (GFA). The active-site Acyl-thioester intermediate is cysteine 175.

Belongs to the LipB family.

It is found in the cytoplasm. The enzyme catalyses octanoyl-[ACP] + L-lysyl-[protein] = N(6)-octanoyl-L-lysyl-[protein] + holo-[ACP] + H(+). Its pathway is protein modification; protein lipoylation via endogenous pathway; protein N(6)-(lipoyl)lysine from octanoyl-[acyl-carrier-protein]: step 1/2. Functionally, catalyzes the transfer of endogenously produced octanoic acid from octanoyl-acyl-carrier-protein onto the lipoyl domains of lipoate-dependent enzymes. Lipoyl-ACP can also act as a substrate although octanoyl-ACP is likely to be the physiological substrate. The polypeptide is Octanoyltransferase (Caldicellulosiruptor bescii (strain ATCC BAA-1888 / DSM 6725 / KCTC 15123 / Z-1320) (Anaerocellum thermophilum)).